The following is a 101-amino-acid chain: Small ribosomal subunit protein uS14 (101 aa).

The protein belongs to the universal ribosomal protein uS14 family. In terms of assembly, part of the 30S ribosomal subunit. Contacts proteins S3 and S10.

Its function is as follows. Binds 16S rRNA, required for the assembly of 30S particles and may also be responsible for determining the conformation of the 16S rRNA at the A site. This Pseudomonas syringae pv. syringae (strain B728a) protein is Small ribosomal subunit protein uS14.